Consider the following 169-residue polypeptide: uncharacterized protein (169 aa).

A run of 2 helical transmembrane segments spans residues 10–30 and 149–169; these read NVHM…FKLI and IPLA…LLIP.

Its subcellular location is the membrane. This is an uncharacterized protein from Dictyostelium discoideum (Social amoeba).